The primary structure comprises 991 residues: uncharacterized protein (991 aa).

Positions 1-17 are cleaved as a signal peptide; it reads MLWPAALVAMFALAARA. Disordered regions lie at residues 332–352, 392–425, 469–511, 542–569, 587–641, and 658–734; these read DPLP…GETT, TTED…TTEG, EDST…EDTT, DTEA…TTPV, PAPT…NSLS, and ASSG…PPRI. A compositionally biased stretch (low complexity) spans 400–413; it reads TSTPTVTTVIDPTS. Over residues 414-425 the composition is skewed to polar residues; it reads GAVTTESRTTEG. Over residues 472–493 the composition is skewed to low complexity; sequence TTTARAAEYPTPTTTTVEPRPA. Residues 542 to 554 are compositionally biased toward polar residues; sequence DTEAAQSATSISD. Low complexity-rich tracts occupy residues 556–569 and 598–615; these read VTPE…TTPV and ASTT…SHTP. 2 stretches are compositionally biased toward polar residues: residues 617–628 and 658–667; these read PQESTSTPSRAP and ASSGPGASTG. A compositionally biased stretch (low complexity) spans 668–682; sequence ATTAPISPPWSASPA. The segment covering 686–710 has biased composition (polar residues); sequence VTTSAARTLEPSSTRKAVAAESTTA.

This is an uncharacterized protein from Psittacid herpesvirus 1 (isolate Amazon parrot/-/97-0001/1997) (PsHV-1).